The primary structure comprises 87 residues: uncharacterized protein (87 aa).

The helical transmembrane segment at 21 to 41 (LSSSLYSVAFFLFFFPNFLFF) threads the bilayer.

Its subcellular location is the membrane. This is an uncharacterized protein from Saccharomyces cerevisiae (strain ATCC 204508 / S288c) (Baker's yeast).